We begin with the raw amino-acid sequence, 493 residues long: Chitinase 1 (493 aa).

Positions 1–20 (MISCNILGITIAAFITSTLA) are cleaved as a signal peptide. One can recognise a GH18 domain in the interval 27–318 (VNVMYYWGQN…HGSSAALGQA (292 aa)). Residue Glu-164 is the Proton donor of the active site.

Belongs to the glycosyl hydrolase 18 family. Chitinase class III subfamily.

The catalysed reaction is Random endo-hydrolysis of N-acetyl-beta-D-glucosaminide (1-&gt;4)-beta-linkages in chitin and chitodextrins.. This chain is Chitinase 1 (CHI1), found in Rhizopus niveus.